A 271-amino-acid polypeptide reads, in one-letter code: UPF0758 protein ACIAD3126 (271 aa).

The region spanning 120-242 is the MPN domain; that stretch reads NLNSSRLVLD…TFSFAERALL (123 aa). Zn(2+) is bound by residues His-191, His-193, and Asp-204. Positions 191–204 match the JAMM motif motif; that stretch reads HNHPFGKAEPSAAD.

It belongs to the UPF0758 family.

This Acinetobacter baylyi (strain ATCC 33305 / BD413 / ADP1) protein is UPF0758 protein ACIAD3126.